Consider the following 228-residue polypeptide: uncharacterized protein (228 aa).

The next 5 membrane-spanning stretches (helical) occupy residues His14–Val34, Val42–Leu62, Phe130–Ser150, Phe156–Met176, and Ile192–Leu212.

Belongs to the AzlC family.

It localises to the cell membrane. This is an uncharacterized protein from Helicobacter pylori (strain ATCC 700392 / 26695) (Campylobacter pylori).